Consider the following 527-residue polypeptide: Abrin-b (527 aa).

Glutamine 1 carries the pyrrolidone carboxylic acid modification. Asparagine 110 carries an N-linked (GlcNAc...) asparagine glycan. The active site involves glutamate 163. Disulfide bonds link cysteine 246-cysteine 268, cysteine 285-cysteine 304, and cysteine 328-cysteine 345. One can recognise a Ricin B-type lectin 1 domain in the interval 272–399; that stretch reads YEPTVRIGGR…YLMRQGWRTG (128 aa). Residues 282-324 form a 1-alpha repeat; sequence NGMCVDVYDDGYHNGNRIIAWKCKDRLEENQLWTLKSDKTIRS. A 1-beta repeat occupies 325 to 365; that stretch reads NGKCLTTEGYAPGNYVMIYDCTSAVAEATYWEIWDNGTIIN. Residues asparagine 360 and asparagine 400 are each glycosylated (N-linked (GlcNAc...) asparagine). A 1-gamma repeat occupies 368-400; the sequence is SALVLSAESSSMGGTLTVQTNEYLMRQGWRTGN. Residues 402–526 form the Ricin B-type lectin 2 domain; sequence TSPFVTSISG…GKPNQIWLTL (125 aa). The stretch at 413 to 448 is one 2-alpha repeat; the sequence is SDLCMQAQGSNVWLAYCDNNKKEQQWALYTDGSIRS. 2 disulfide bridges follow: cysteine 416/cysteine 429 and cysteine 455/cysteine 472. The 2-beta repeat unit spans residues 452-491; the sequence is TNNCLTSKDHKQGSPIVLMACSNGWASQRWLFRNDGSIYN. The 2-gamma repeat unit spans residues 494 to 527; that stretch reads DDMVMDVKRSDPSLKEIILHPYHGKPNQIWLTLF.

It in the N-terminal section; belongs to the ribosome-inactivating protein family. Type 2 RIP subfamily. As to quaternary structure, disulfide-linked dimer of A and B chains.

The enzyme catalyses Endohydrolysis of the N-glycosidic bond at one specific adenosine on the 28S rRNA.. In terms of biological role, the A chain is responsible for inhibiting protein synthesis through the catalytic inactivation of 60S ribosomal subunits by removing adenine from position 4,324 of 28S rRNA. Abrin-a is more toxic than ricin. The B chain is a galactose-specific lectin that facilitates the binding of abrin to the cell membrane that precedes endocytosis. The sequence is that of Abrin-b from Abrus precatorius (Indian licorice).